The primary structure comprises 130 residues: Movement protein TGB2 (130 aa).

Topologically, residues 1 to 12 are cytoplasmic; it reads MPGLTPPVNYEQ. Residues 13-30 traverse the membrane as a helical segment; that stretch reads VYKVLAIGFLLCASIYCL. Over 31–72 the chain is Lumenal; that stretch reads RSNHLPHVGDNIHSLPHGGNYADGTKRVQYFRPHSSTSTNHK. The helical transmembrane segment at 73-90 threads the bilayer; that stretch reads YTALCAVLTLSLLIFAQT. The Cytoplasmic portion of the chain corresponds to 91–130; that stretch reads RLAAGNRITSVSICHHCSSQGSLSGGNHGRVSGHSELPTT. The tract at residues 110-130 is disordered; that stretch reads QGSLSGGNHGRVSGHSELPTT.

This sequence belongs to the Tymovirales TGBp2 protein family.

The protein localises to the host endoplasmic reticulum membrane. Functionally, plays a role in viral cell-to-cell propagation, by facilitating genome transport to neighboring plant cells through plasmosdesmata,. This Narcissus pseudonarcissus (Daffodil) protein is Movement protein TGB2.